We begin with the raw amino-acid sequence, 374 residues long: 3-dehydroquinate synthase (374 aa).

The protein belongs to the archaeal-type DHQ synthase family.

The enzyme catalyses 2-amino-2,3,7-trideoxy-D-lyxo-hept-6-ulosonate + NAD(+) + H2O = 3-dehydroquinate + NH4(+) + NADH + H(+). Its function is as follows. Catalyzes the oxidative deamination and cyclization of 2-amino-3,7-dideoxy-D-threo-hept-6-ulosonic acid (ADH) to yield 3-dehydroquinate (DHQ), which is fed into the canonical shikimic pathway of aromatic amino acid biosynthesis. The chain is 3-dehydroquinate synthase from Methanocella arvoryzae (strain DSM 22066 / NBRC 105507 / MRE50).